The primary structure comprises 201 residues: Recombination protein RecR (201 aa).

A C4-type zinc finger spans residues 60–75 (CQICGNIDTRDPCTIC). In terms of domain architecture, Toprim spans 83–178 (TLLVVVETVA…KITRLAHGVP (96 aa)).

The protein belongs to the RecR family.

May play a role in DNA repair. It seems to be involved in an RecBC-independent recombinational process of DNA repair. It may act with RecF and RecO. In Beijerinckia indica subsp. indica (strain ATCC 9039 / DSM 1715 / NCIMB 8712), this protein is Recombination protein RecR.